Reading from the N-terminus, the 466-residue chain is MQHGSLITVEYQTVNYVSGPLIFVERPKEISFGETAQIILPDGEARTGQILDISEDIAVVQVFEGTRGIDSHVTTVRFTGQSPLLDVSYDMLGRVLDGVGRPRDGGPEIIPEARLDIAGMPINPYSRDKPAEFIQTGISAIDALNTLVRGQKLPIFSGAGLPANQLAAQIAKQAKVLGEGENFAVVFAAMGITYKEASFFMKEFEESGALERVVFFLNLADDPTIERIATPRCALTAAEFLAYTHNLHVLVILTDMTNYCDALREISTAREEIPGRRGYPGYMYTDLATIYERAGRIKGCTGSITQIPILTMPDDDITHPVPDLTGYITEGQIVLSRDLFRKGINPPIDALPCLSRLMNLGIGPGKTREDHRNVADQLYASYAYGRDLRRLVAIVGEEALSELDRNYLKFADHFEKRFISQGNVERSIETTLQVAWELFSLLPDEELKRIKEEYIDKYRTLIISGG.

It belongs to the ATPase alpha/beta chains family. In terms of assembly, has multiple subunits with at least A(3), B(3), C, D, E, F, H, I and proteolipid K(x).

Its subcellular location is the cell membrane. Component of the A-type ATP synthase that produces ATP from ADP in the presence of a proton gradient across the membrane. The B chain is a regulatory subunit. The sequence is that of A-type ATP synthase subunit B 2 from Methanospirillum hungatei JF-1 (strain ATCC 27890 / DSM 864 / NBRC 100397 / JF-1).